The chain runs to 152 residues: Proteolipid protein 2 (152 aa).

The MARVEL domain occupies 19 to 137; that stretch reads FSRTRKGILL…DAYFTFPLRQ (119 aa). Helical transmembrane passes span 25–45, 48–68, and 85–105; these read GILL…FSAG, GYSS…VIYM, and FFRT…VLVE. Asn108 is a glycosylation site (N-linked (GlcNAc...) asparagine). A helical membrane pass occupies residues 112 to 132; sequence IAAGVLGLLATCLFGYDAYFT.

It is found in the membrane. May play a role in cell differentiation in the intestinal epithelium. This is Proteolipid protein 2 (PLP2) from Oryctolagus cuniculus (Rabbit).